We begin with the raw amino-acid sequence, 378 residues long: Glutamate 5-kinase (378 aa).

Lys14 lines the ATP pocket. Substrate is bound by residues Ser54, Asp141, and Asn153. 173 to 174 (SD) lines the ATP pocket. The PUA domain maps to 279-356 (AGRLTVDAGA…DEISEILGYD (78 aa)).

The protein belongs to the glutamate 5-kinase family.

Its subcellular location is the cytoplasm. It carries out the reaction L-glutamate + ATP = L-glutamyl 5-phosphate + ADP. It participates in amino-acid biosynthesis; L-proline biosynthesis; L-glutamate 5-semialdehyde from L-glutamate: step 1/2. In terms of biological role, catalyzes the transfer of a phosphate group to glutamate to form L-glutamate 5-phosphate. The polypeptide is Glutamate 5-kinase (Brucella anthropi (strain ATCC 49188 / DSM 6882 / CCUG 24695 / JCM 21032 / LMG 3331 / NBRC 15819 / NCTC 12168 / Alc 37) (Ochrobactrum anthropi)).